A 150-amino-acid chain; its full sequence is MQVLVDADACPAVIKDMLFRAARRAEICVTLVANQFLRTPPSPFIKSVQVPAGFDVADARIVELAQAGDLVITADIPLAAAVLDKGAHALDPRGNWFSRENIEERLSTRAMMDQLRSSGVDTGGPAPFSARDGKAFASQLDRFLARHGKP.

Belongs to the UPF0178 family.

This Burkholderia ambifaria (strain MC40-6) protein is UPF0178 protein BamMC406_1579.